Consider the following 168-residue polypeptide: S-ribosylhomocysteine lyase (168 aa).

3 residues coordinate Fe cation: His54, His58, and Cys128.

This sequence belongs to the LuxS family. In terms of assembly, homodimer. Fe cation serves as cofactor.

It carries out the reaction S-(5-deoxy-D-ribos-5-yl)-L-homocysteine = (S)-4,5-dihydroxypentane-2,3-dione + L-homocysteine. In terms of biological role, involved in the synthesis of autoinducer 2 (AI-2) which is secreted by bacteria and is used to communicate both the cell density and the metabolic potential of the environment. The regulation of gene expression in response to changes in cell density is called quorum sensing. Catalyzes the transformation of S-ribosylhomocysteine (RHC) to homocysteine (HC) and 4,5-dihydroxy-2,3-pentadione (DPD). The chain is S-ribosylhomocysteine lyase from Histophilus somni (strain 129Pt) (Haemophilus somnus).